The chain runs to 445 residues: Oxysterols receptor LXR-alpha (445 aa).

Disordered stretches follow at residues Met-1–Asn-34 and Thr-62–Pro-86. Residues Met-1–Glu-94 form a transactivation AF-1; required for ligand-independent transactivation function region. The segment at residues Asn-93–Ser-168 is a DNA-binding region (nuclear receptor). 2 consecutive NR C4-type zinc fingers follow at residues Cys-96–Cys-116 and Cys-132–Cys-156. Residues Lys-178–Val-200 form a disordered region. A compositionally biased stretch (low complexity) spans Ser-189–Val-200. The residue at position 191 (Ser-191) is a Phosphoserine. A transactivation AF-2; required for ligand-dependent transactivation function; mediates interaction with CCAR2 region spans residues Gln-203 to Glu-445. An NR LBD domain is found at Glu-207–Glu-445.

It belongs to the nuclear hormone receptor family. NR1 subfamily. Heterodimer of NR1H3 and RXR (retinoic acid receptor). Interacts with CCAR2 (via N-terminus) in a ligand-independent manner. Interacts with SIRT1 and this interaction is inhibited by CCAR2. In terms of processing, ubiquitinated by UBR5, leading to its degradation: UBR5 specifically recognizes and binds ligand-bound NR1H3 when it is not associated with coactivators (NCOAs). In presence of NCOAs, the UBR5-degron is not accessible, preventing its ubiquitination and degradation. In terms of tissue distribution, in adults it is expressed in spleen, pituitary, lung, liver, and fat. Weaker expression is observed in several other tissues.

It localises to the nucleus. Its subcellular location is the cytoplasm. In terms of biological role, nuclear receptor that exhibits a ligand-dependent transcriptional activation activity. Interaction with retinoic acid receptor (RXR) shifts RXR from its role as a silent DNA-binding partner to an active ligand-binding subunit in mediating retinoid responses through target genes defined by LXRES. LXRES are DR4-type response elements characterized by direct repeats of two similar hexanuclotide half-sites spaced by four nucleotides. Plays an important role in the regulation of cholesterol homeostasis, regulating cholesterol uptake through MYLIP-dependent ubiquitination of LDLR, VLDLR and LRP8. Interplays functionally with RORA for the regulation of genes involved in liver metabolism. Induces LPCAT3-dependent phospholipid remodeling in endoplasmic reticulum (ER) membranes of hepatocytes, driving SREBF1 processing and lipogenesis. Via LPCAT3, triggers the incorporation of arachidonate into phosphatidylcholines of ER membranes, increasing membrane dynamics and enabling triacylglycerols transfer to nascent very low-density lipoprotein (VLDL) particles. Via LPCAT3 also counteracts lipid-induced ER stress response and inflammation, likely by modulating SRC kinase membrane compartmentalization and limiting the synthesis of lipid inflammatory mediators. The polypeptide is Oxysterols receptor LXR-alpha (Nr1h3) (Rattus norvegicus (Rat)).